Here is a 79-residue protein sequence, read N- to C-terminus: MQFKKQLLVIFFAYFLVVNESEAFFGTLFKLGSKLIPGVMKLFSKKKERSLMKRELKNLYDPYQRSVEMERLLKELPLY.

The N-terminal stretch at 1–23 (MQFKKQLLVIFFAYFLVVNESEA) is a signal peptide. Positions 50 to 79 (SLMKRELKNLYDPYQRSVEMERLLKELPLY) are excised as a propeptide.

The protein belongs to the non-disulfide-bridged peptide (NDBP) superfamily. Medium-length antimicrobial peptide (group 3) family. In terms of tissue distribution, expressed by the venom gland.

It localises to the secreted. Its subcellular location is the target cell membrane. Antimicrobial peptide. Shows antibacterial activity against all M.massiliense bacterial strains tested. Has antifungal activity against Candida spp. and two Cryptococcus neoformans strains with MICs values ranging from 6.25 to 200 uM. Also shows an inhibitory activity on C.albicans biofilms at high concentrations. Exhibits chemotactic activity for monocytes, neutrophils, and eosinophils. Shows low cytotoxic activity and has weak hemolytic activity on human erythrocytes. In vivo, treatment of infected mice with M.massiliense reduces the bacterial load in the liver, lung, and spleen. May act by disrupting the integrity of the bacterial cell membrane. The polypeptide is Antimicrobial peptide ToAP2 (Tityus obscurus (Amazonian scorpion)).